A 263-amino-acid chain; its full sequence is Versicolorin reductase 1 (263 aa).

NADP(+)-binding residues include I22, D68, N95, and R128. Active-site proton donor residues include S144 and S145. 4 residues coordinate NADP(+): Y159, K163, I192, and T194. Catalysis depends on Y159, which acts as the Proton acceptor. K163 acts as the Lowers pKa of active site Tyr in catalysis.

Belongs to the short-chain dehydrogenases/reductases (SDR) family.

The protein localises to the cytoplasm. It is found in the cytosol. It participates in mycotoxin biosynthesis. Versicolorin reductase; part of the fragmented gene cluster that mediates the biosynthesis of dothistromin (DOTH), a polyketide toxin very similar in structure to the aflatoxin precursor, versicolorin B. The first step of the pathway is the conversion of acetate to norsolorinic acid (NOR) and requires the fatty acid synthase subunits hexA and hexB, as well as the polyketide synthase pksA. PksA combines a hexanoyl starter unit and 7 malonyl-CoA extender units to synthesize the precursor NOR. The hexanoyl starter unit is provided to the acyl-carrier protein (ACP) domain by the fungal fatty acid synthase hexA/hexB. The second step is the conversion of NOR to averantin (AVN) and requires the norsolorinic acid ketoreductase nor1, which catalyzes the dehydration of norsolorinic acid to form (1'S)-averantin. The cytochrome P450 monooxygenase avnA then catalyzes the hydroxylation of AVN to 5'hydroxyaverantin (HAVN). The next step is performed by adhA that transforms HAVN to averufin (AVF). Averufin might then be converted to hydroxyversicolorone by cypX and avfA. Hydroxyversicolorone is further converted versiconal hemiacetal acetate (VHA) by moxY. VHA is then the substrate for the versiconal hemiacetal acetate esterase est1 to yield versiconal (VAL). Versicolorin B synthase vbsA then converts VAL to versicolorin B (VERB) by closing the bisfuran ring. Then, the activity of the versicolorin B desaturase verB leads to versicolorin A (VERA). DotB, a predicted chloroperoxidase, may perform epoxidation of the A-ring of VERA. Alternatively, a cytochrome P450, such as cypX or avnA could catalyze this step. It is also possible that another, uncharacterized, cytochrome P450 enzyme is responsible for this step. Opening of the epoxide could potentially be achieved by the epoxide hydrolase epoA. However, epoA seems not to be required for DOTH biosynthesis, but other epoxide hydrolases may have the ability to complement this hydrolysis. Alternatively, opening of the epoxide ring could be achieved non-enzymatically. The next step is the deoxygenation of ring A to yield the 5,8-dihydroxyanthraquinone which is most likely catalyzed by the NADPH dehydrogenase encoded by ver1. The last stages of DOTH biosynthesis are proposed to involve hydroxylation of the bisfuran. OrdB and norB might have oxidative roles here. An alternative possibility is that cytochrome P450 monoogenases such as avnA and cypX might perform these steps in addition to previously proposed steps. In Dothistroma septosporum (Red band needle blight fungus), this protein is Versicolorin reductase 1.